The chain runs to 414 residues: MKCLCFVVLLAILIAQNSSDLGVKSASSDGFVSRKGVQFILNGKPFYANGFNAYWLAYEATDSTTRFKITYVFQNATIHDLTIVRTWGFRDGGYRALQIAPGVYDEKTFQGLDFAIAEAKRLGIKMIITFVNNYSDFGGRKQYVDWAKNTGQNVSSDDDFYTNPLVKQYYKNHVKTMVNRVNTFTKVEYKDEPTIMGWELMNEPQCRADPSGKTLTAWMNEMALYVKSVDSKHLLSTGLEGFYGDSSPQRKTSLNPVAANVLGTDFIANHKLDAIDFASIHSYPDLWFPNLDEKSRLNLLRKWLECHLEDAQNILKKPLILGEFGKPTNTPGYTQAQRDAVFNATFDTIYESAEKGGPAAGALFWHVISDGMNNFKDPLSIVLSENSTTVNIITEESRKLGLIRGKGKLSKTKI.

A signal peptide spans 1-19 (MKCLCFVVLLAILIAQNSS). Asn-17 and Asn-75 each carry an N-linked (GlcNAc...) asparagine glycan. Trp-87 contributes to the substrate binding site. 2 N-linked (GlcNAc...) asparagine glycosylation sites follow: Asn-133 and Asn-153. Asn-202 contacts substrate. Glu-203 functions as the Proton donor in the catalytic mechanism. Substrate is bound at residue Tyr-283. Glu-323 functions as the Nucleophile in the catalytic mechanism. Asn-343 is a glycosylation site (N-linked (GlcNAc...) asparagine). Trp-365 lines the substrate pocket. N-linked (GlcNAc...) asparagine glycosylation is present at Asn-386.

Belongs to the glycosyl hydrolase 5 (cellulase A) family. Expressed in leaves, flowers, siliques and seeds.

The protein localises to the secreted. The enzyme catalyses Random hydrolysis of (1-&gt;4)-beta-D-mannosidic linkages in mannans, galactomannans and glucomannans.. This Arabidopsis thaliana (Mouse-ear cress) protein is Mannan endo-1,4-beta-mannosidase 3 (MAN3).